Here is a 199-residue protein sequence, read N- to C-terminus: Small ribosomal subunit protein uS14m (199 aa).

Residues 28–67 are disordered; sequence LSTPAPEPAKPSSEETTESTEPATSVEDAGEPMKEKRITQ.

Belongs to the universal ribosomal protein uS14 family. Component of the mitochondrial ribosome small subunit (28S) which comprises a 12S rRNA and about 30 distinct proteins. Interacts with LIAT1.

Its subcellular location is the mitochondrion. In Caenorhabditis elegans, this protein is Small ribosomal subunit protein uS14m (mrps-14).